The primary structure comprises 431 residues: Serine hydroxymethyltransferase (431 aa).

(6S)-5,6,7,8-tetrahydrofolate is bound at residue 122-124 (GHI). Position 228 is an N6-(pyridoxal phosphate)lysine (Lys228). (6S)-5,6,7,8-tetrahydrofolate is bound at residue Glu245.

Belongs to the SHMT family. In terms of assembly, homodimer. Pyridoxal 5'-phosphate is required as a cofactor.

The protein localises to the cytoplasm. The protein operates within amino-acid biosynthesis; glycine biosynthesis; glycine from L-serine: step 1/1. Functionally, catalyzes the reversible interconversion of serine and glycine with a modified folate serving as the one-carbon carrier. Also exhibits a pteridine-independent aldolase activity toward beta-hydroxyamino acids, producing glycine and aldehydes, via a retro-aldol mechanism. The chain is Serine hydroxymethyltransferase from Thermococcus kodakarensis (strain ATCC BAA-918 / JCM 12380 / KOD1) (Pyrococcus kodakaraensis (strain KOD1)).